Consider the following 251-residue polypeptide: Octanoyltransferase (251 aa).

A BPL/LPL catalytic domain is found at 56–241 (AETPDEIWIV…NLDGASAAAD (186 aa)). Substrate is bound by residues 96-103 (RGGQITYH), 168-170 (ALG), and 181-183 (GLS). Cys-199 functions as the Acyl-thioester intermediate in the catalytic mechanism.

This sequence belongs to the LipB family.

It localises to the cytoplasm. The catalysed reaction is octanoyl-[ACP] + L-lysyl-[protein] = N(6)-octanoyl-L-lysyl-[protein] + holo-[ACP] + H(+). The protein operates within protein modification; protein lipoylation via endogenous pathway; protein N(6)-(lipoyl)lysine from octanoyl-[acyl-carrier-protein]: step 1/2. In terms of biological role, catalyzes the transfer of endogenously produced octanoic acid from octanoyl-acyl-carrier-protein onto the lipoyl domains of lipoate-dependent enzymes. Lipoyl-ACP can also act as a substrate although octanoyl-ACP is likely to be the physiological substrate. This Burkholderia vietnamiensis (strain G4 / LMG 22486) (Burkholderia cepacia (strain R1808)) protein is Octanoyltransferase.